The chain runs to 285 residues: Hypersensitive-induced reaction 1 protein (285 aa).

G2 carries N-myristoyl glycine lipidation. Residues 118-190 (FEQKNEIAKS…EKILQIKRAE (73 aa)) are a coiled coil.

Homo- and heterodimer. Interacts with LRR1 (via LRR domain). Constitutively expressed in stems, roots and flowers, but not in leaves and fruits.

Positive regulator of hypersensitive response (HR)-like cell death. May be involved in potassium ion channel regulation. In Capsicum annuum (Capsicum pepper), this protein is Hypersensitive-induced reaction 1 protein.